We begin with the raw amino-acid sequence, 224 residues long: RNA-binding protein 24-B (224 aa).

The RRM domain occupies 11 to 88 (TKIFVGGLPY…RKANVNLAYL (78 aa)).

The protein localises to the nucleus. Its subcellular location is the cytoplasm. Functionally, multifunctional RNA-binding protein involved in the regulation of pre-mRNA splicing, mRNA stability and mRNA translation important for cell fate decision and differentiation. Plays a major role in pre-mRNA alternative splicing regulation. Mediates preferentially muscle-specific exon inclusion in numerous mRNAs important for striated cardiac and skeletal muscle cell differentiation. Binds to intronic splicing enhancer (ISE) composed of stretches of GU-rich motifs localized in flanking intron of exon that will be included by alternative splicing. Involved in embryonic stem cell (ESC) transition to cardiac cell differentiation by promoting pre-mRNA alternative splicing events of several pluripotency and/or differentiation genes. Plays a role in the regulation of mRNA stability and mRNA translation to which it is bound. Involved in myogenic differentiation by regulating myog levels. Binds to a huge amount of mRNAs. Required for embryonic heart development, sarcomer and M-band formation in striated muscles. In Xenopus laevis (African clawed frog), this protein is RNA-binding protein 24-B (rbm24-b).